Reading from the N-terminus, the 377-residue chain is Iris (377 aa).

N-linked (GlcNAc...) asparagine glycans are attached at residues Asn11 and Asn226.

Belongs to the serpin family. Female saliva (at protein level). Female salivary gland (at protein level).

The protein resides in the secreted. In terms of biological role, serine protease inhibitor with anticoagulant and immunosuppressive properties that can modulate blood feeding of ticks on vertebrate species. Strongly inhibits human leukocyte elastase (ELANE) and porcine pancreatic elastase. Moderately inhibits human tPA/tissue-type plasminogen activator (PLAT), coagulation factor Xa (F10), thrombin (F2) and trypsin. Does not inhibit human plasmin (PLG). Inhibits platelet aggregation. Inhibits the intrinsic pathway of blood coagulation in the host. Inhibits fibrinolysis in the host. Inhibits proliferation of mouse splenocytes. Decreases the number of IFN-gamma (IFNG)-producing human peripheral blood mononuclear cells (PBMCs) after stimulation with phytohemagglutinin A (PHA). Increases the number of IL10-producing human PBMCs after stimulation with lipopolysaccharides (LPS) with no significant effect on IL10 production. Inhibits production of IFNG, IL6, TNF-alpha (TNF) and CXCL8 by human PBMCs. Binds to monocyte/macrophage subpopulation of the host PBMCs. Increases both survival rate and survival time in mice with LPS-induced endotoxemic shock. The sequence is that of Iris from Ixodes ricinus (Common tick).